The primary structure comprises 996 residues: NACHT, LRR and PYD domains-containing protein 9 (996 aa).

Residues 1-94 (MAESFFSDFG…WRKARNEIRQ (94 aa)) form the Pyrin domain. One can recognise an NACHT domain in the interval 150–469 (PTVVLHGPEG…FYMFTRPKDP (320 aa)). 156–163 (GPEGIGKT) serves as a coordination point for ATP. LRR repeat units follow at residues 748–769 (KLNL…VLCE), 777–798 (ALEA…HLSQ), 805–825 (SLTF…TTLC), 834–855 (NLQE…DIAT), 862–883 (KLKT…QLCK), and 891–914 (KLEN…ASAL).

The protein belongs to the NLRP family. In terms of assembly, sensor component of NLRP9 inflammasomes. Inflammasomes are supramolecular complexes that assemble in the cytosol in response to pathogens, such as rotavirus, and play critical roles in innate immunity and inflammation. The core of NLRP9 inflammasomes consists of a signal sensor component (NLRP9), an adapter (ASC/PYCARD), which recruits an effector pro-inflammatory caspase (CASP1). Within the complex, NLRP9 and PYCARD interact via their respective DAPIN/pyrin domains. This interaction initiates speck formation (nucleation) which greatly enhances further addition of soluble PYCARD molecules to the speck in a prion-like polymerization process. Clustered PYCARD nucleates the formation of CASP1 filaments through the interaction of their respective CARD domains, acting as a platform for CASP1 polymerization. CASP1 filament formation increases local enzyme concentration, resulting in trans-autocleavage and activation. Active CASP1 then processes IL1B and IL18 precursors, leading to the release of mature cytokines in the extracellular milieu and inflammatory response. Interacts with DHX9 upon rotavirus infection; this interaction may trigger inflammasome activation and inflammatory response. As to expression, detected exclusively in testis and ovary, and at high level in the oocyte from antral follicles.

The protein localises to the cytoplasm. Its subcellular location is the inflammasome. Functionally, as the sensor component of the NLRP9 inflammasome, plays a crucial role in innate immunity and inflammation. In response to pathogens, including rotavirus, initiates the formation of the inflammasome polymeric complex, made of NLRP9, PYCARD and CASP1. Recruitment of proCASP1 to the inflammasome promotes its activation and CASP1-catalyzed IL1B and IL18 maturation and release in the extracellular milieu. The active cytokines stimulate inflammatory responses. Inflammasomes can also induce pyroptosis, an inflammatory form of programmed cell death. NLRP9 inflammasome activation may be initiated by DHX9 interaction with viral double-stranded RNA (dsRNA), preferentially to short dsRNA segments. The chain is NACHT, LRR and PYD domains-containing protein 9 (NLRP9) from Bos taurus (Bovine).